A 294-amino-acid chain; its full sequence is 4-hydroxy-tetrahydrodipicolinate synthase (294 aa).

T44 is a pyruvate binding site. Y132 (proton donor/acceptor) is an active-site residue. The active-site Schiff-base intermediate with substrate is the K161. I206 is a binding site for pyruvate.

The protein belongs to the DapA family. As to quaternary structure, homotetramer; dimer of dimers.

It localises to the cytoplasm. It catalyses the reaction L-aspartate 4-semialdehyde + pyruvate = (2S,4S)-4-hydroxy-2,3,4,5-tetrahydrodipicolinate + H2O + H(+). Its pathway is amino-acid biosynthesis; L-lysine biosynthesis via DAP pathway; (S)-tetrahydrodipicolinate from L-aspartate: step 3/4. Functionally, catalyzes the condensation of (S)-aspartate-beta-semialdehyde [(S)-ASA] and pyruvate to 4-hydroxy-tetrahydrodipicolinate (HTPA). This is 4-hydroxy-tetrahydrodipicolinate synthase from Thermotoga neapolitana (strain ATCC 49049 / DSM 4359 / NBRC 107923 / NS-E).